Here is a 184-residue protein sequence, read N- to C-terminus: Gastrokine-2 (184 aa).

A signal peptide spans 1–20 (MKPLVAFLVVLSIFGIQSQA). In terms of domain architecture, BRICHOS spans 54 to 151 (HSGSCSSTTI…LCKHMPLYEG (98 aa)). Cys81 and Cys143 are joined by a disulfide.

Heterodimer with TFF1; disulfide linked. Interacts with TFF2. In terms of tissue distribution, stomach foveolar epithelium and duodenal Brunner's glands.

Its subcellular location is the secreted. The protein resides in the golgi apparatus. This is Gastrokine-2 (Gkn2) from Mus musculus (Mouse).